A 55-amino-acid polypeptide reads, in one-letter code: ATP synthase F(0) complex subunit 8 (55 aa).

A helical transmembrane segment spans residues Leu4–Leu24. Residues Pro34 to His55 are disordered.

The protein belongs to the ATPase protein 8 family. In terms of assembly, component of the ATP synthase complex composed at least of ATP5F1A/subunit alpha, ATP5F1B/subunit beta, ATP5MC1/subunit c (homooctomer), MT-ATP6/subunit a, MT-ATP8/subunit 8, ATP5ME/subunit e, ATP5MF/subunit f, ATP5MG/subunit g, ATP5MK/subunit k, ATP5MJ/subunit j, ATP5F1C/subunit gamma, ATP5F1D/subunit delta, ATP5F1E/subunit epsilon, ATP5PF/subunit F6, ATP5PB/subunit b, ATP5PD/subunit d, ATP5PO/subunit OSCP. ATP synthase complex consists of a soluble F(1) head domain (subunits alpha(3) and beta(3)) - the catalytic core - and a membrane F(0) domain - the membrane proton channel (subunits c, a, 8, e, f, g, k and j). These two domains are linked by a central stalk (subunits gamma, delta, and epsilon) rotating inside the F1 region and a stationary peripheral stalk (subunits F6, b, d, and OSCP).

It localises to the mitochondrion membrane. Subunit 8, of the mitochondrial membrane ATP synthase complex (F(1)F(0) ATP synthase or Complex V) that produces ATP from ADP in the presence of a proton gradient across the membrane which is generated by electron transport complexes of the respiratory chain. ATP synthase complex consist of a soluble F(1) head domain - the catalytic core - and a membrane F(1) domain - the membrane proton channel. These two domains are linked by a central stalk rotating inside the F(1) region and a stationary peripheral stalk. During catalysis, ATP synthesis in the catalytic domain of F(1) is coupled via a rotary mechanism of the central stalk subunits to proton translocation. In vivo, can only synthesize ATP although its ATP hydrolase activity can be activated artificially in vitro. Part of the complex F(0) domain. The polypeptide is ATP synthase F(0) complex subunit 8 (Gadus morhua (Atlantic cod)).